A 306-amino-acid chain; its full sequence is Transcription initiation factor IIB 2 (306 aa).

The TFIIB-type zinc-finger motif lies at 6–37; that stretch reads PKRVCPICGSTEFIYDPRRGEIVCAKCGYVIE. Zn(2+)-binding residues include C10, C13, C29, and C32. 2 tandem repeats follow at residues 123–206 and 217–298.

This sequence belongs to the TFIIB family.

Stabilizes TBP binding to an archaeal box-A promoter. Also responsible for recruiting RNA polymerase II to the pre-initiation complex (DNA-TBP-TFIIB). The sequence is that of Transcription initiation factor IIB 2 from Thermococcus kodakarensis (strain ATCC BAA-918 / JCM 12380 / KOD1) (Pyrococcus kodakaraensis (strain KOD1)).